Here is a 1416-residue protein sequence, read N- to C-terminus: Gag-Pro-Pol polyprotein (1416 aa).

The N-myristoyl glycine; by host moiety is linked to residue Gly2. Residues 100–103 (PPPY) carry the PPXY motif motif. 2 CCHC-type zinc fingers span residues 345–362 (GPCYRCLKEGHWARDCPT) and 370–387 (GPCPICKDPSHWKRDCPT). The 79-residue stretch at 447–525 (ALMLVDTGAE…DKWQILGRDV (79 aa)) folds into the Peptidase A2 domain. The active-site Protease; shared with dimeric partner is Asp452. In terms of domain architecture, Reverse transcriptase spans 586-776 (LEAGYISPWD…SPVPFLGQMV (191 aa)). Residues Asp652, Asp727, Asp728, Asp1005, Glu1036, Asp1057, Asp1118, Asp1190, and Asp1247 each contribute to the Mg(2+) site. The RNase H type-1 domain maps to 996–1126 (IPAALCLFSD…VDQLLPLETP (131 aa)). Positions 1179–1343 (RGWAPNHIWQ…SPPLAVISEG (165 aa)) constitute an Integrase catalytic domain. A DNA-binding region (integrase-type) is located at residues 1352–1400 (KLFLYKLPGQNNRRWLGPLPALVEASGGALLATNPPVWVPWRLLKAFKC).

It belongs to the retroviral Pol polyprotein family. As to quaternary structure, homodimer; the homodimers are part of the immature particles. Interacts with human TSG101 and NEDD4; these interactions are essential for budding and release of viral particles. Homodimer; further assembles as homohexamers. Mg(2+) is required as a cofactor. Post-translationally, phosphorylation of the matrix protein p15 by MAPK1 seems to play a role in budding. Myristoylated. Myristoylation of the matrix (MA) domain mediates the transport and binding of Gag polyproteins to the host plasma membrane and is required for the assembly of viral particles. In terms of processing, specific enzymatic cleavages by the viral protease yield mature proteins. The polyprotein is cleaved during and after budding, this process is termed maturation. The protease is autoproteolytically processed at its N- and C-termini.

It localises to the virion. It catalyses the reaction Endonucleolytic cleavage to 5'-phosphomonoester.. The enzyme catalyses DNA(n) + a 2'-deoxyribonucleoside 5'-triphosphate = DNA(n+1) + diphosphate. In terms of biological role, the matrix domain targets Gag, Gag-Pro and Gag-Pro-Pol polyproteins to the plasma membrane via a multipartite membrane binding signal, that includes its myristoylated N-terminus. Functionally, matrix protein. Its function is as follows. Forms the spherical core of the virus that encapsulates the genomic RNA-nucleocapsid complex. Binds strongly to viral nucleic acids and promote their aggregation. Also destabilizes the nucleic acids duplexes via highly structured zinc-binding motifs. In terms of biological role, the aspartyl protease mediates proteolytic cleavages of Gag and Gag-Pol polyproteins during or shortly after the release of the virion from the plasma membrane. Cleavages take place as an ordered, step-wise cascade to yield mature proteins. This process is called maturation. Displays maximal activity during the budding process just prior to particle release from the cell. Functionally, RT is a multifunctional enzyme that converts the viral RNA genome into dsDNA in the cytoplasm, shortly after virus entry into the cell. This enzyme displays a DNA polymerase activity that can copy either DNA or RNA templates, and a ribonuclease H (RNase H) activity that cleaves the RNA strand of RNA-DNA heteroduplexes in a partially processive 3' to 5'-endonucleasic mode. Conversion of viral genomic RNA into dsDNA requires many steps. A tRNA-Pro binds to the primer-binding site (PBS) situated at the 5'-end of the viral RNA. RT uses the 3' end of the tRNA primer to perform a short round of RNA-dependent minus-strand DNA synthesis. The reading proceeds through the U5 region and ends after the repeated (R) region which is present at both ends of viral RNA. The portion of the RNA-DNA heteroduplex is digested by the RNase H, resulting in a ssDNA product attached to the tRNA primer. This ssDNA/tRNA hybridizes with the identical R region situated at the 3' end of viral RNA. This template exchange, known as minus-strand DNA strong stop transfer, can be either intra- or intermolecular. RT uses the 3' end of this newly synthesized short ssDNA to perform the RNA-dependent minus-strand DNA synthesis of the whole template. RNase H digests the RNA template except for a polypurine tract (PPT) situated at the 5' end of the genome. It is not clear if both polymerase and RNase H activities are simultaneous. RNase H probably can proceed both in a polymerase-dependent (RNA cut into small fragments by the same RT performing DNA synthesis) and a polymerase-independent mode (cleavage of remaining RNA fragments by free RTs). Secondly, RT performs DNA-directed plus-strand DNA synthesis using the PPT that has not been removed by RNase H as primer. PPT and tRNA primers are then removed by RNase H. The 3' and 5' ssDNA PBS regions hybridize to form a circular dsDNA intermediate. Strand displacement synthesis by RT to the PBS and PPT ends produces a blunt ended, linear dsDNA copy of the viral genome that includes long terminal repeats (LTRs) at both ends. Its function is as follows. Catalyzes viral DNA integration into the host chromosome, by performing a series of DNA cutting and joining reactions. The sequence is that of Gag-Pro-Pol polyprotein (pol) from Bos taurus (Bovine).